The chain runs to 895 residues: Pentatricopeptide repeat-containing protein At1g74600, chloroplastic (895 aa).

The transit peptide at 1–71 directs the protein to the chloroplast; sequence MNCLANESLN…CNLRTTKILQ (71 aa). 22 PPR repeats span residues 83 to 113, 114 to 148, 149 to 183, 184 to 214, 215 to 249, 250 to 280, 284 to 314, 315 to 349, 350 to 384, 385 to 415, 417 to 451, 452 to 483, 484 to 514, 515 to 549, 550 to 584, 585 to 615, 616 to 650, 651 to 685, 686 to 716, 717 to 751, 752 to 787, and 788 to 818; these read DVFL…IPQP, DVVS…GFEA, NEIS…GYFF, YEVV…SLSA, NVYC…FQKP, DSYT…VIKC, DVFV…IPNP, SVVS…GVEI, NNCT…GFYL, DSSV…LDDI, RQNI…GLRT, DEFS…GLVL, DLTV…IPFK, DNAC…GTSP, DEST…GIDK, GMDL…LPEL, DPVS…GFTM, DSFA…GLCT, EPSV…INGP, DLIA…GFKP, DKVT…GIEP, and ENRH…MHIK. The type E motif; degenerate stretch occupies residues 824 to 895; sequence WGTLLAACKI…VQKEPGWSSV (72 aa).

It belongs to the PPR family. PCMP-E subfamily.

Its subcellular location is the plastid. The protein resides in the chloroplast. The polypeptide is Pentatricopeptide repeat-containing protein At1g74600, chloroplastic (PCMP-E69) (Arabidopsis thaliana (Mouse-ear cress)).